The chain runs to 381 residues: Prostatic acid phosphatase (381 aa).

Positions 1-31 (MRAVPLHLVGTASLTLGFLLLLSLRLDPGQA) are cleaved as a signal peptide. Arg-42 serves as a coordination point for substrate. His-43 serves as the catalytic Nucleophile. Arg-46 provides a ligand contact to substrate. N-linked (GlcNAc...) asparagine glycosylation occurs at Asn-93. Arg-110 provides a ligand contact to substrate. Cystine bridges form between Cys-160–Cys-371, Cys-214–Cys-312, and Cys-346–Cys-350. N-linked (GlcNAc...) asparagine glycosylation is present at Asn-219. Residue His-288 participates in substrate binding. Asp-289 acts as the Proton donor in catalysis. Asn-332 is a glycosylation site (N-linked (GlcNAc...) asparagine).

The protein belongs to the histidine acid phosphatase family. As to quaternary structure, homodimer; dimer formation is required for phosphatase activity. N-glycosylated. In terms of tissue distribution, expressed in prostate epithelium. Also expressed in the pelvic nerve and sacral spinal cord. Localizes in peptidergic and non-peptidergic nociceptive (pain-sensing) neurons.

Its subcellular location is the secreted. The protein resides in the cell membrane. It is found in the lysosome membrane. The enzyme catalyses a phosphate monoester + H2O = an alcohol + phosphate. It carries out the reaction a ribonucleoside 5'-phosphate + H2O = a ribonucleoside + phosphate. It catalyses the reaction 1-(9Z-octadecenoyl)-sn-glycero-3-phosphate + H2O = 1-(9Z-octadecenoyl)-sn-glycerol + phosphate. The catalysed reaction is O-phospho-L-tyrosyl-[protein] + H2O = L-tyrosyl-[protein] + phosphate. Its activity is regulated as follows. Inhibited by L(+)-tartrate. A non-specific tyrosine phosphatase that dephosphorylates a diverse number of substrates under acidic conditions (pH 4-6) including alkyl, aryl, and acyl orthophosphate monoesters and phosphorylated proteins. Has lipid phosphatase activity and inactivates lysophosphatidic acid in seminal plasma. Its function is as follows. In addition to its tyrosine phosphatase activity, also has ecto-5'-nucleotidase activity in dorsal root ganglion (DRG) neurons. Generates adenosine from AMP. This extracellular adenosine leads to a decrease in chronic pain by activating A1R in nociceptive neurons. The chain is Prostatic acid phosphatase (Acp3) from Rattus norvegicus (Rat).